The following is a 228-amino-acid chain: Ribonuclease H (228 aa).

The region spanning 2 to 142 (GPMRTIVYAD…ADRLATLGRR (141 aa)) is the RNase H type-1 domain. Mg(2+) contacts are provided by Asp11, Glu49, Asp71, and Asp134.

Belongs to the RNase H family. In terms of assembly, monomer. The cofactor is Mg(2+).

Its subcellular location is the cytoplasm. It catalyses the reaction Endonucleolytic cleavage to 5'-phosphomonoester.. Endonuclease that specifically degrades the RNA of RNA-DNA hybrids. The sequence is that of Ribonuclease H from Methylorubrum extorquens (strain PA1) (Methylobacterium extorquens).